A 573-amino-acid chain; its full sequence is Glutamate--tRNA ligase (573 aa).

The short motif at 107-117 (PNPDGAFHLGN) is the 'HIGH' region element.

It belongs to the class-I aminoacyl-tRNA synthetase family. Glutamate--tRNA ligase type 2 subfamily.

It localises to the cytoplasm. The enzyme catalyses tRNA(Glu) + L-glutamate + ATP = L-glutamyl-tRNA(Glu) + AMP + diphosphate. Catalyzes the attachment of glutamate to tRNA(Glu) in a two-step reaction: glutamate is first activated by ATP to form Glu-AMP and then transferred to the acceptor end of tRNA(Glu). This Thermococcus kodakarensis (strain ATCC BAA-918 / JCM 12380 / KOD1) (Pyrococcus kodakaraensis (strain KOD1)) protein is Glutamate--tRNA ligase.